A 142-amino-acid polypeptide reads, in one-letter code: Hemoglobin subunit beta-2 (142 aa).

The Globin domain maps to 2–142 (SLTDEEKHLI…VTEALSCQYH (141 aa)). Positions 59 and 88 each coordinate heme b.

The protein belongs to the globin family. Heterotetramer of two alpha chains and two beta chains. As to expression, red blood cells.

Its function is as follows. Involved in oxygen transport from the lung to the various peripheral tissues. This chain is Hemoglobin subunit beta-2 (HBB2), found in Torpedo marmorata (Marbled electric ray).